Here is a 137-residue protein sequence, read N- to C-terminus: Peptide methionine sulfoxide reductase MsrB (137 aa).

The interval 1–33 (MSNNQDRPGQITDESLRERLSPEAYAVTRRAGT) is disordered. The region spanning 13–135 (DESLRERLSP…NSLSLDFKAA (123 aa)) is the MsrB domain. Zn(2+) is bound by residues C52, C55, C101, and C104. C124 functions as the Nucleophile in the catalytic mechanism.

It belongs to the MsrB Met sulfoxide reductase family. Zn(2+) serves as cofactor.

The enzyme catalyses L-methionyl-[protein] + [thioredoxin]-disulfide + H2O = L-methionyl-(R)-S-oxide-[protein] + [thioredoxin]-dithiol. The chain is Peptide methionine sulfoxide reductase MsrB from Thioalkalivibrio sulfidiphilus (strain HL-EbGR7).